We begin with the raw amino-acid sequence, 355 residues long: Protein RecA (355 aa).

ATP is bound at residue 67-74 (GPESSGKT).

This sequence belongs to the RecA family.

It is found in the cytoplasm. Can catalyze the hydrolysis of ATP in the presence of single-stranded DNA, the ATP-dependent uptake of single-stranded DNA by duplex DNA, and the ATP-dependent hybridization of homologous single-stranded DNAs. It interacts with LexA causing its activation and leading to its autocatalytic cleavage. In Shewanella baltica (strain OS223), this protein is Protein RecA.